The primary structure comprises 320 residues: MKLAFIIDPLEKLDPGHDSTVAIMEAAQKLGHEVFVTSVGDLAVINGQAWAKLAAVRLQPVILVDGHWQVSQPWSELSKSQWMALTECQAVFMRKDPPVTVQYLYATFILELLAPTKTMVINSPQGLREANEKMYTLQFAAVMPPTVVSLDKGLIRQFLEEHGAAVLKPLGGKAGEGILFLDPGDRNFNSLVEISTQHGKEPVMVQRFLPEAKEGDKRIILLDGDPIGAVNRIPSGAEFRGNMAVGGQVAPTTITSREIEICALLKPKLQADGLYFVGIDVIGGYLTEVNVTSPTGIREIDRLEGVRLGEKVICWLEKQF.

Positions 133 to 317 (KMYTLQFAAV…LGEKVICWLE (185 aa)) constitute an ATP-grasp domain. 159–215 (LEEHGAAVLKPLGGKAGEGILFLDPGDRNFNSLVEISTQHGKEPVMVQRFLPEAKEG) serves as a coordination point for ATP. Glu288 and Asn290 together coordinate Mg(2+).

It belongs to the prokaryotic GSH synthase family. The cofactor is Mg(2+). Mn(2+) is required as a cofactor.

The enzyme catalyses gamma-L-glutamyl-L-cysteine + glycine + ATP = glutathione + ADP + phosphate + H(+). The protein operates within sulfur metabolism; glutathione biosynthesis; glutathione from L-cysteine and L-glutamate: step 2/2. The sequence is that of Glutathione synthetase from Synechocystis sp. (strain ATCC 27184 / PCC 6803 / Kazusa).